Consider the following 127-residue polypeptide: Large ribosomal subunit protein eL32 (127 aa).

A compositionally biased stretch (basic and acidic residues) spans 38–48; it reads WRRPKGIDSKM. A disordered region spans residues 38 to 66; that stretch reads WRRPKGIDSKMRLKKKGKPRSPSIGWSSP.

The protein belongs to the eukaryotic ribosomal protein eL32 family.

This is Large ribosomal subunit protein eL32 from Thermococcus gammatolerans (strain DSM 15229 / JCM 11827 / EJ3).